A 192-amino-acid polypeptide reads, in one-letter code: Elongation factor P (192 aa).

This sequence belongs to the elongation factor P family.

Its subcellular location is the cytoplasm. It functions in the pathway protein biosynthesis; polypeptide chain elongation. Functionally, involved in peptide bond synthesis. Stimulates efficient translation and peptide-bond synthesis on native or reconstituted 70S ribosomes in vitro. Probably functions indirectly by altering the affinity of the ribosome for aminoacyl-tRNA, thus increasing their reactivity as acceptors for peptidyl transferase. The sequence is that of Elongation factor P (efp) from Aquifex aeolicus (strain VF5).